Consider the following 232-residue polypeptide: GFP-like non-fluorescent chromoprotein FP595 (232 aa).

The 2-iminomethyl-5-imidazolinone (Met-Gly) cross-link spans 63–65 (MYG). The residue at position 64 (Y64) is a (E)-2,3-didehydrotyrosine.

Belongs to the GFP family. Post-translationally, contains a chromophore consisting of modified amino acid residues. The chromophore is formed by autocatalytic backbone condensation between Xaa-N and Gly-(N+2), oxidation of Tyr-(N+1) to didehydrotyrosine, and formation of a double bond to the alpha-amino nitrogen of residue Tyr-(N+1). Maturation of the chromophore requires nothing other than molecular oxygen. As to expression, tentacle tips.

Its function is as follows. Pigment protein that is intensely purple in color. In Anemonia sulcata (Mediterranean snakelocks sea anemone), this protein is GFP-like non-fluorescent chromoprotein FP595.